The sequence spans 131 residues: Replicase polyprotein 1ab (131 aa).

Residues I1 to I128 form the Nidovirus-type SAM-dependent 2'-O-MTase domain.

Functionally, the replicase polyprotein of coronaviruses is a multifunctional protein: it contains the activities necessary for the transcription of negative stranded RNA, leader RNA, subgenomic mRNAs and progeny virion RNA as well as proteinases responsible for the cleavage of the polyprotein into functional products. The chain is Replicase polyprotein 1ab (rep) from Sus scrofa (Pig).